We begin with the raw amino-acid sequence, 421 residues long: MHKLLKLAAMGTAACALLAGMAPVANAQEKQNVEVLHWWTSGGEASALEVLKKDLESKGISWTDMPVAGGGGTEAMTVLRARVTAGNAPTAVQMLGFDIRDWAKQGALGNLDTVASKEGWEKVIPAPLQEFAKYDGHWIAAPVNIHSTNWMWINKAALDKAGGKEPTNWDELIALLDNFKAQGITPIAHGGQPWQDATIFDAVVLSFGPDFYKKAFIDLDPEALGSDTMKQAFDRMSKLRTYVDDNFSGRDWNLASAMVIEGKAGVQFMGDWAKGEFLKAGKKPGEDFVCMRYPGTQGAVTFNSDMFAMFKVSEDKVPAQLEMASAIESPAFQSAFNVVKGSAPARTDVPDTAFDACGKKAIADVKEANSKGTLLGSMAHGYANPAAVKNAIYDVVTRQFNGQLSSEDAVKELVAAVEAAK.

A signal peptide spans 1–27 (MHKLLKLAAMGTAACALLAGMAPVANA).

It belongs to the bacterial solute-binding protein 1 family.

Its subcellular location is the periplasm. In terms of biological role, part of a binding-protein-dependent transport system for a sugar. The polypeptide is Probable sugar-binding periplasmic protein (Brucella suis biovar 1 (strain 1330)).